Reading from the N-terminus, the 389-residue chain is Lipid-A-disaccharide synthase (389 aa).

It belongs to the LpxB family.

The enzyme catalyses a lipid X + a UDP-2-N,3-O-bis[(3R)-3-hydroxyacyl]-alpha-D-glucosamine = a lipid A disaccharide + UDP + H(+). It functions in the pathway bacterial outer membrane biogenesis; LPS lipid A biosynthesis. Condensation of UDP-2,3-diacylglucosamine and 2,3-diacylglucosamine-1-phosphate to form lipid A disaccharide, a precursor of lipid A, a phosphorylated glycolipid that anchors the lipopolysaccharide to the outer membrane of the cell. In Paraburkholderia phytofirmans (strain DSM 17436 / LMG 22146 / PsJN) (Burkholderia phytofirmans), this protein is Lipid-A-disaccharide synthase.